The following is a 316-amino-acid chain: Adenine deaminase (316 aa).

Residues His-14, His-16, and His-194 each contribute to the Zn(2+) site. Glu-197 serves as the catalytic Proton donor. Asp-275 is a Zn(2+) binding site. Asp-276 lines the substrate pocket.

This sequence belongs to the metallo-dependent hydrolases superfamily. Adenosine and AMP deaminases family. Adenine deaminase type 2 subfamily. Zn(2+) serves as cofactor.

The enzyme catalyses adenine + H2O + H(+) = hypoxanthine + NH4(+). Functionally, catalyzes the hydrolytic deamination of adenine to hypoxanthine. Plays an important role in the purine salvage pathway and in nitrogen catabolism. The sequence is that of Adenine deaminase from Stutzerimonas stutzeri (strain A1501) (Pseudomonas stutzeri).